Reading from the N-terminus, the 121-residue chain is Small ribosomal subunit protein uS13 (121 aa).

The segment at 93–121 is disordered; it reads KGLPLRGQKTKTNARTRKGPKKTIANKKK.

Belongs to the universal ribosomal protein uS13 family. In terms of assembly, part of the 30S ribosomal subunit. Forms a loose heterodimer with protein S19. Forms two bridges to the 50S subunit in the 70S ribosome.

Functionally, located at the top of the head of the 30S subunit, it contacts several helices of the 16S rRNA. In the 70S ribosome it contacts the 23S rRNA (bridge B1a) and protein L5 of the 50S subunit (bridge B1b), connecting the 2 subunits; these bridges are implicated in subunit movement. Contacts the tRNAs in the A and P-sites. The sequence is that of Small ribosomal subunit protein uS13 from Clostridium perfringens (strain ATCC 13124 / DSM 756 / JCM 1290 / NCIMB 6125 / NCTC 8237 / Type A).